A 161-amino-acid chain; its full sequence is S-ribosylhomocysteine lyase (161 aa).

3 residues coordinate Fe cation: His58, His62, and Cys128.

This sequence belongs to the LuxS family. In terms of assembly, homodimer. It depends on Fe cation as a cofactor.

It carries out the reaction S-(5-deoxy-D-ribos-5-yl)-L-homocysteine = (S)-4,5-dihydroxypentane-2,3-dione + L-homocysteine. Functionally, involved in the synthesis of autoinducer 2 (AI-2) which is secreted by bacteria and is used to communicate both the cell density and the metabolic potential of the environment. The regulation of gene expression in response to changes in cell density is called quorum sensing. Catalyzes the transformation of S-ribosylhomocysteine (RHC) to homocysteine (HC) and 4,5-dihydroxy-2,3-pentadione (DPD). The protein is S-ribosylhomocysteine lyase of Bifidobacterium adolescentis (strain ATCC 15703 / DSM 20083 / NCTC 11814 / E194a).